The sequence spans 395 residues: Elongation factor Tu (395 aa).

In terms of domain architecture, tr-type G spans 10 to 205 (KPHVNIGTIG…CDTWIPLPPR (196 aa)). The segment at 19 to 26 (GHVDHGKT) is G1. A GTP-binding site is contributed by 19-26 (GHVDHGKT). Position 26 (Thr-26) interacts with Mg(2+). Residues 60–64 (GITIN) are G2. The segment at 81 to 84 (DCPG) is G3. GTP is bound by residues 81–85 (DCPGH) and 136–139 (NKCD). The G4 stretch occupies residues 136–139 (NKCD). Residues 174–176 (SAL) are G5.

This sequence belongs to the TRAFAC class translation factor GTPase superfamily. Classic translation factor GTPase family. EF-Tu/EF-1A subfamily. Monomer.

It is found in the cytoplasm. The catalysed reaction is GTP + H2O = GDP + phosphate + H(+). Functionally, GTP hydrolase that promotes the GTP-dependent binding of aminoacyl-tRNA to the A-site of ribosomes during protein biosynthesis. This is Elongation factor Tu from Parabacteroides distasonis (strain ATCC 8503 / DSM 20701 / CIP 104284 / JCM 5825 / NCTC 11152).